A 104-amino-acid chain; its full sequence is Large ribosomal subunit protein uL24 (104 aa).

It belongs to the universal ribosomal protein uL24 family. As to quaternary structure, part of the 50S ribosomal subunit.

Its function is as follows. One of two assembly initiator proteins, it binds directly to the 5'-end of the 23S rRNA, where it nucleates assembly of the 50S subunit. One of the proteins that surrounds the polypeptide exit tunnel on the outside of the subunit. This is Large ribosomal subunit protein uL24 from Methylobacterium radiotolerans (strain ATCC 27329 / DSM 1819 / JCM 2831 / NBRC 15690 / NCIMB 10815 / 0-1).